The primary structure comprises 477 residues: Aspartyl/glutamyl-tRNA(Asn/Gln) amidotransferase subunit B (477 aa).

It belongs to the GatB/GatE family. GatB subfamily. In terms of assembly, heterotrimer of A, B and C subunits.

The catalysed reaction is L-glutamyl-tRNA(Gln) + L-glutamine + ATP + H2O = L-glutaminyl-tRNA(Gln) + L-glutamate + ADP + phosphate + H(+). It carries out the reaction L-aspartyl-tRNA(Asn) + L-glutamine + ATP + H2O = L-asparaginyl-tRNA(Asn) + L-glutamate + ADP + phosphate + 2 H(+). In terms of biological role, allows the formation of correctly charged Asn-tRNA(Asn) or Gln-tRNA(Gln) through the transamidation of misacylated Asp-tRNA(Asn) or Glu-tRNA(Gln) in organisms which lack either or both of asparaginyl-tRNA or glutaminyl-tRNA synthetases. The reaction takes place in the presence of glutamine and ATP through an activated phospho-Asp-tRNA(Asn) or phospho-Glu-tRNA(Gln). This is Aspartyl/glutamyl-tRNA(Asn/Gln) amidotransferase subunit B from Legionella pneumophila subsp. pneumophila (strain Philadelphia 1 / ATCC 33152 / DSM 7513).